A 208-amino-acid polypeptide reads, in one-letter code: Proheparin-binding EGF-like growth factor (208 aa).

Positions 1-19 are cleaved as a signal peptide; that stretch reads MKLLPSVVLKLFLAAVLSA. The propeptide at 20–62 is or 72, or 73, or 76, or 81; that stretch reads LVTGESLERLRRGLAAGTSNPDPPTVSTDQLLPLGGGRDRKVR. Residues 20–160 lie on the Extracellular side of the membrane; it reads LVTGESLERL…ENRLYTYDHT (141 aa). Positions 33–56 are disordered; that stretch reads LAAGTSNPDPPTVSTDQLLPLGGG. Polar residues predominate over residues 36-49; sequence GTSNPDPPTVSTDQ. Threonine 37 is a glycosylation site (O-linked (GalNAc...) threonine). An O-linked (GalNAc...) serine glycan is attached at serine 38. O-linked (GalNAc...) threonine glycans are attached at residues threonine 44, threonine 47, threonine 75, and threonine 85. The segment at 82–104 is disordered; it reads ALATPNKEEHGKRKKKGKGLGKK. Residues 93 to 102 show a composition bias toward basic residues; it reads KRKKKGKGLG. In terms of domain architecture, EGF-like spans 104–144; it reads KRDPCLRKYKDFCIHGECKYVKELRAPSCICHPGYHGERCH. 3 disulfides stabilise this stretch: cysteine 108/cysteine 121, cysteine 116/cysteine 132, and cysteine 134/cysteine 143. Residues 149–208 constitute a propeptide, C-terminal; the sequence is PVENRLYTYDHTTILAVVAVVLSSVCLLVIVGLLMFRYHRRGGYDVENEEKVKLGMTNSH. Residues 161–184 form a helical membrane-spanning segment; that stretch reads TILAVVAVVLSSVCLLVIVGLLMF. Residues 185–208 are Cytoplasmic-facing; that stretch reads RYHRRGGYDVENEEKVKLGMTNSH.

Interacts with FBLN1. Interacts with EGFR and ERBB4. In terms of processing, several N-termini have been identified by direct sequencing. The forms with N-termini 63, 73 and 74 have been tested and found to be biologically active. O-glycosylated with core 1 or possibly core 8 glycans. Thr-47 is a minor glycosylation site compared to Thr-44.

The protein resides in the secreted. The protein localises to the extracellular space. Its subcellular location is the cell membrane. Functionally, growth factor that mediates its effects via EGFR, ERBB2 and ERBB4. Required for normal cardiac valve formation and normal heart function. Promotes smooth muscle cell proliferation. May be involved in macrophage-mediated cellular proliferation. It is mitogenic for fibroblasts, but not endothelial cells. It is able to bind EGF receptor/EGFR with higher affinity than EGF itself and is a far more potent mitogen for smooth muscle cells than EGF. Also acts as a diphtheria toxin receptor. This Homo sapiens (Human) protein is Proheparin-binding EGF-like growth factor (HBEGF).